The following is a 570-amino-acid chain: Protein B602L (570 aa).

Repeat copies occupy residues 161–164 (CADT), 165–168 (NAST), 169–172 (SADT), 173–176 (NAST), 177–180 (CADT), 181–184 (NVDT), 185–188 (CAST), 189–192 (CADT), 193–196 (NVDT), 197–200 (CADT), 201–204 (CAST), 205–208 (CAST), 209–212 (CAST), 213–216 (CAST), 217–220 (CADT), 221–224 (NVDT), 225–228 (CADT), 229–232 (CVST), 233–236 (CAST), and 237–240 (CANT). The segment at 161 to 240 (CADTNASTSA…STCASTCANT (80 aa)) is 20 X 4 AA tandem repeats of [CNS]-[ATV]-[DNS]-T.

The protein belongs to the asfivirus B602L family.

Its subcellular location is the host cytoplasm. Its function is as follows. Plays an essential role in the assembly of the icosahedral capsid of the virus. Allows the assembly of 3 molecules of hexon protein p72 and formation of a thermostable trimer. The protein is Protein B602L of African swine fever virus (isolate Tick/South Africa/Pretoriuskop Pr4/1996) (ASFV).